A 160-amino-acid polypeptide reads, in one-letter code: Cyanate hydratase (160 aa).

Active-site residues include arginine 100, glutamate 103, and serine 126.

The protein belongs to the cyanase family.

The catalysed reaction is cyanate + hydrogencarbonate + 3 H(+) = NH4(+) + 2 CO2. Catalyzes the reaction of cyanate with bicarbonate to produce ammonia and carbon dioxide. The sequence is that of Cyanate hydratase from Aspergillus niger (strain ATCC MYA-4892 / CBS 513.88 / FGSC A1513).